Reading from the N-terminus, the 166-residue chain is NAD(P)H-quinone oxidoreductase subunit I, chloroplastic (166 aa).

4Fe-4S ferredoxin-type domains lie at G55 to K84 and L95 to E124. Positions 64, 67, 70, 74, 104, 107, 110, and 114 each coordinate [4Fe-4S] cluster.

This sequence belongs to the complex I 23 kDa subunit family. As to quaternary structure, NDH is composed of at least 16 different subunits, 5 of which are encoded in the nucleus. [4Fe-4S] cluster serves as cofactor.

It localises to the plastid. The protein localises to the chloroplast thylakoid membrane. The catalysed reaction is a plastoquinone + NADH + (n+1) H(+)(in) = a plastoquinol + NAD(+) + n H(+)(out). It catalyses the reaction a plastoquinone + NADPH + (n+1) H(+)(in) = a plastoquinol + NADP(+) + n H(+)(out). Functionally, NDH shuttles electrons from NAD(P)H:plastoquinone, via FMN and iron-sulfur (Fe-S) centers, to quinones in the photosynthetic chain and possibly in a chloroplast respiratory chain. The immediate electron acceptor for the enzyme in this species is believed to be plastoquinone. Couples the redox reaction to proton translocation, and thus conserves the redox energy in a proton gradient. The protein is NAD(P)H-quinone oxidoreductase subunit I, chloroplastic of Sigesbeckia blakei.